Here is a 206-residue protein sequence, read N- to C-terminus: Proteasome subunit beta 2 (206 aa).

A propeptide spans 1–7 (MREAVSK) (removed in mature form; by autocatalysis). Thr8 acts as the Nucleophile in catalysis.

Belongs to the peptidase T1B family. As to quaternary structure, the 20S proteasome core is composed of 14 alpha and 14 beta subunits that assemble into four stacked heptameric rings, resulting in a barrel-shaped structure. The two inner rings, each composed of seven catalytic beta subunits, are sandwiched by two outer rings, each composed of seven alpha subunits. The catalytic chamber with the active sites is on the inside of the barrel. Has a gated structure, the ends of the cylinder being occluded by the N-termini of the alpha-subunits. Is capped at one or both ends by the proteasome regulatory ATPase, PAN.

It is found in the cytoplasm. It catalyses the reaction Cleavage of peptide bonds with very broad specificity.. With respect to regulation, the formation of the proteasomal ATPase PAN-20S proteasome complex, via the docking of the C-termini of PAN into the intersubunit pockets in the alpha-rings, triggers opening of the gate for substrate entry. Interconversion between the open-gate and close-gate conformations leads to a dynamic regulation of the 20S proteasome proteolysis activity. Component of the proteasome core, a large protease complex with broad specificity involved in protein degradation. The polypeptide is Proteasome subunit beta 2 (Desulfurococcus amylolyticus (strain DSM 18924 / JCM 16383 / VKM B-2413 / 1221n) (Desulfurococcus kamchatkensis)).